Reading from the N-terminus, the 572-residue chain is Probable transporter MCH1 (572 aa).

The segment covering 1–29 (MSSSAPDDTQASRLDADQISTRSSSYASD) has biased composition (polar residues). The interval 1–39 (MSSSAPDDTQASRLDADQISTRSSSYASDNDTDSTETRI) is disordered. N-linked (GlcNAc...) asparagine glycosylation is present at asparagine 30. The next 10 membrane-spanning stretches (helical) occupy residues 50–70 (LLAF…VVFS), 89–109 (AVAI…GYIC), 116–136 (PLAL…AGVY), 159–179 (FLML…MAAV), 193–213 (GLAL…LSQA), 232–252 (VFRF…LGTF), 335–355 (LAFL…GTII), 426–446 (FMAF…SGLV), 459–479 (LVGA…TIIW), and 488–508 (YGLI…VYSA). Residue asparagine 515 is glycosylated (N-linked (GlcNAc...) asparagine). Residues 539-559 (PTYWAETITVWIAVGLLLWAW) traverse the membrane as a helical segment.

The protein belongs to the major facilitator superfamily.

It is found in the vacuole membrane. Probable transporter. This is Probable transporter MCH1 (MCH1) from Gibberella zeae (strain ATCC MYA-4620 / CBS 123657 / FGSC 9075 / NRRL 31084 / PH-1) (Wheat head blight fungus).